The primary structure comprises 99 residues: DNA-binding protein Fis (99 aa).

A DNA-binding region (H-T-H motif) is located at residues 75–94; the sequence is QTRAASIMGINRSTLRKKLK.

Belongs to the transcriptional regulatory Fis family. Homodimer.

Functionally, activates ribosomal RNA transcription. Plays a direct role in upstream activation of rRNA promoters. This Buchnera aphidicola subsp. Schizaphis graminum (strain Sg) protein is DNA-binding protein Fis.